Consider the following 191-residue polypeptide: Elongation factor P-like protein (191 aa).

Belongs to the elongation factor P family.

This Shewanella sediminis (strain HAW-EB3) protein is Elongation factor P-like protein.